We begin with the raw amino-acid sequence, 380 residues long: Cytochrome b (380 aa).

4 helical membrane-spanning segments follow: residues 33–53, 77–98, 113–133, and 178–198; these read FGSL…FLAM, WLIR…YLHV, WNIG…GYVL, and FFAF…IHLL. Heme b is bound by residues histidine 83 and histidine 97. Heme b is bound by residues histidine 182 and histidine 196. Histidine 201 serves as a coordination point for a ubiquinone. Transmembrane regions (helical) follow at residues 226–246, 288–308, 320–340, and 347–367; these read YKDL…ALFS, LGGV…PMLH, PSQI…WIGG, and FVLI…IALP.

It belongs to the cytochrome b family. As to quaternary structure, the cytochrome bc1 complex contains 3 respiratory subunits (MT-CYB, CYC1 and UQCRFS1), 2 core proteins (UQCRC1 and UQCRC2) and probably 6 low-molecular weight proteins. The cofactor is heme b.

It localises to the mitochondrion inner membrane. Functionally, component of the ubiquinol-cytochrome c reductase complex (complex III or cytochrome b-c1 complex) that is part of the mitochondrial respiratory chain. The b-c1 complex mediates electron transfer from ubiquinol to cytochrome c. Contributes to the generation of a proton gradient across the mitochondrial membrane that is then used for ATP synthesis. The protein is Cytochrome b (mt-cyb) of Acipenser sinensis (Chinese sturgeon).